The primary structure comprises 375 residues: Tryptophan dimethylallyltransferase (375 aa).

L-tryptophan-binding positions include 83–84 and Glu92; that span reads IL. Positions 103, 189, and 191 each coordinate substrate. L-tryptophan is bound by residues Tyr193 and Arg246. Positions 259, 261, 263, 345, and 347 each coordinate substrate.

This sequence belongs to the tryptophan dimethylallyltransferase family. Homodimer.

It catalyses the reaction L-tryptophan + dimethylallyl diphosphate = 4-(3-methylbut-2-enyl)-L-tryptophan + diphosphate. It functions in the pathway alkaloid biosynthesis; ergot alkaloid biosynthesis. In terms of biological role, tryptophan dimethylallyltransferase; part of the gene cluster that mediates the biosynthesis of fungal ergot alkaloid. DmaW catalyzes the first step of ergot alkaloid biosynthesis by condensing dimethylallyl diphosphate (DMAP) and tryptophan to form 4-dimethylallyl-L-tryptophan. The second step is catalyzed by the methyltransferase easF that methylates 4-dimethylallyl-L-tryptophan in the presence of S-adenosyl-L-methionine, resulting in the formation of 4-dimethylallyl-L-abrine. The catalase easC and the FAD-dependent oxidoreductase easE then transform 4-dimethylallyl-L-abrine to chanoclavine-I which is further oxidized by easD in the presence of NAD(+), resulting in the formation of chanoclavine-I aldehyde. Chanoclavine-I aldehyde is the precursor of ergoamides and ergopeptines in Clavicipitaceae, and clavine-type alcaloids such as fumiclavine in Trichocomaceae. However, the metabolites downstream of chanoclavine-I aldehyde in Arthrodermataceae have not been identified yet. This Trichophyton verrucosum (strain HKI 0517) protein is Tryptophan dimethylallyltransferase.